Consider the following 178-residue polypeptide: MSVRKILRMGDPILRKISEPVTEDEIQTKEFKKLIRDMFDTMRHAEGVGLAAPQIGILKQIVVVGSEDNERYPGTPDVPERIILNPVITPLTKDTSGFWEGCLSVPGMRGYVERPNQIRMQWMDEKGNQFDETIDGYKAIVYQHECDHLQGILYVDRLKDTKLFGFNETLDSSHNVLD.

Residues cysteine 102 and histidine 144 each contribute to the Fe cation site. The active site involves glutamate 145. Histidine 148 is a Fe cation binding site.

Belongs to the polypeptide deformylase family. It depends on Fe(2+) as a cofactor.

It carries out the reaction N-terminal N-formyl-L-methionyl-[peptide] + H2O = N-terminal L-methionyl-[peptide] + formate. Functionally, removes the formyl group from the N-terminal Met of newly synthesized proteins. Requires at least a dipeptide for an efficient rate of reaction. N-terminal L-methionine is a prerequisite for activity but the enzyme has broad specificity at other positions. The protein is Peptide deformylase of Leptospira interrogans serogroup Icterohaemorrhagiae serovar copenhageni (strain Fiocruz L1-130).